We begin with the raw amino-acid sequence, 473 residues long: Serine palmitoyltransferase 1 (473 aa).

The Lumenal segment spans residues 1-15 (MATATEQWVLVEMVQ). The tract at residues 1–66 (MATATEQWVL…KEELIEEWQP (66 aa)) is interaction with SPTLC2. A helical membrane pass occupies residues 16 to 36 (ALYEAPAYHLILEGILILWII). The Cytoplasmic portion of the chain corresponds to 37–473 (RLLFSKTYKL…IKEVAQAVLL (437 aa)). Residue tyrosine 164 is modified to Phosphotyrosine; by ABL.

It belongs to the class-II pyridoxal-phosphate-dependent aminotransferase family. In terms of assembly, component of the serine palmitoyltransferase (SPT) complex, which is also composed of SPTLC2 or SPTLC3 and SPTSSA or SPTSSB. The heterodimer with SPTLC2 or SPTLC3 forms the catalytic core of the enzyme, while SPTSSA or SPTSSB subunits determine substrate specificity. SPT also interacts with ORMDL proteins, especially ORMDL3, which negatively regulate SPT activity in the presence of ceramides. Forms dimers of heterodimers with SPTLC2. Interacts with RTN4. The cofactor is pyridoxal 5'-phosphate. Post-translationally, phosphorylation at Tyr-164 inhibits activity and promotes cell survival.

Its subcellular location is the endoplasmic reticulum membrane. The enzyme catalyses L-serine + hexadecanoyl-CoA + H(+) = 3-oxosphinganine + CO2 + CoA. The catalysed reaction is octadecanoyl-CoA + L-serine + H(+) = 3-oxoeicosasphinganine + CO2 + CoA. It carries out the reaction tetradecanoyl-CoA + L-serine + H(+) = 3-oxohexadecasphinganine + CO2 + CoA. It catalyses the reaction dodecanoyl-CoA + L-serine + H(+) = 3-oxotetradecasphinganine + CO2 + CoA. It functions in the pathway lipid metabolism; sphingolipid metabolism. With respect to regulation, SPT complex catalytic activity is negatively regulated by ORMDL proteins, including ORMDL3, in the presence of ceramides. This mechanism allows to maintain ceramide levels at sufficient concentrations for the production of complex sphingolipids, but which prevents the accumulation of ceramides to levels that trigger apoptosis. Its function is as follows. Component of the serine palmitoyltransferase multisubunit enzyme (SPT) that catalyzes the initial and rate-limiting step in sphingolipid biosynthesis by condensing L-serine and activated acyl-CoA (most commonly palmitoyl-CoA) to form long-chain bases. The SPT complex is also composed of SPTLC2 or SPTLC3 and SPTSSA or SPTSSB. Within this complex, the heterodimer with SPTLC2 or SPTLC3 forms the catalytic core. The composition of the serine palmitoyltransferase (SPT) complex determines the substrate preference. The SPTLC1-SPTLC2-SPTSSA complex shows a strong preference for C16-CoA substrate, while the SPTLC1-SPTLC3-SPTSSA isozyme uses both C14-CoA and C16-CoA as substrates, with a slight preference for C14-CoA. The SPTLC1-SPTLC2-SPTSSB complex shows a strong preference for C18-CoA substrate, while the SPTLC1-SPTLC3-SPTSSB isozyme displays an ability to use a broader range of acyl-CoAs, without apparent preference. Required for adipocyte cell viability and metabolic homeostasis. In Macaca fascicularis (Crab-eating macaque), this protein is Serine palmitoyltransferase 1 (SPTLC1).